Here is a 114-residue protein sequence, read N- to C-terminus: Large ribosomal subunit protein bL19 (114 aa).

This sequence belongs to the bacterial ribosomal protein bL19 family.

Functionally, this protein is located at the 30S-50S ribosomal subunit interface and may play a role in the structure and function of the aminoacyl-tRNA binding site. The polypeptide is Large ribosomal subunit protein bL19 (Listeria welshimeri serovar 6b (strain ATCC 35897 / DSM 20650 / CCUG 15529 / CIP 8149 / NCTC 11857 / SLCC 5334 / V8)).